The primary structure comprises 139 residues: Protein 2.8 (139 aa).

The sequence is that of Protein 2.8 from Escherichia phage T7 (Bacteriophage T7).